Here is a 1854-residue protein sequence, read N- to C-terminus: Dystrophin, isoform D (1854 aa).

Disordered regions lie at residues methionine 1–alanine 65, glycine 84–proline 161, glutamine 240–alanine 352, leucine 516–serine 548, threonine 595–serine 650, valine 716–alanine 740, leucine 783–proline 830, and valine 1012–arginine 1036. 2 stretches are compositionally biased toward low complexity: residues glutamine 11–glutamine 37 and glycine 84–serine 96. Polar residues predominate over residues glycine 143–asparagine 157. Residues glutamine 276–glutamine 296 show a composition bias toward low complexity. 2 stretches are compositionally biased toward polar residues: residues threonine 331–aspartate 345 and proline 518–alanine 536. The segment covering threonine 595–alanine 606 has biased composition (gly residues). Polar residues predominate over residues valine 716–valine 727. Composition is skewed to low complexity over residues threonine 728–alanine 740 and leucine 783–glutamine 814. Polar residues predominate over residues asparagine 815–proline 830. Spectrin repeat units follow at residues glutamate 936–glutamate 1069 and threonine 1072–glutamine 1176. A disordered region spans residues alanine 1179 to lysine 1209. Residues glutamine 1206 to methionine 1239 enclose the WW domain. The segment at lysine 1464–threonine 1520 adopts a ZZ-type zinc-finger fold. 8 residues coordinate Zn(2+): cysteine 1469, cysteine 1472, cysteine 1484, cysteine 1487, cysteine 1493, cysteine 1496, histidine 1506, and histidine 1510. Phosphoserine is present on serine 1564. 2 disordered regions span residues glutamate 1673–glycine 1701 and aspartate 1744–lysine 1854. Composition is skewed to polar residues over residues asparagine 1682–leucine 1694 and alanine 1765–glycine 1796. Acidic residues predominate over residues glutamine 1815 to aspartate 1826. Over residues serine 1827–threonine 1845 the composition is skewed to low complexity.

Component of the dystrophin associated protein complex (DAPC). Interacts with Dg, via the Dg WW domain binding sites. During embryogenesis and in third instar larvae, expression is seen in pericardial cells of the dorsal vessel and in the ventral nerve cord. Expression is absent from both the embryonic and larval musculature.

It is found in the cell membrane. The protein resides in the sarcolemma. Its subcellular location is the cytoplasm. The protein localises to the cytoskeleton. Required for the maintenance of appropriate synaptic retrograde communication and the stabilization of muscle cell architecture or physiology. May play a role in anchoring the cytoskeleton to the plasma membrane. This chain is Dystrophin, isoform D (Dys), found in Drosophila melanogaster (Fruit fly).